The sequence spans 254 residues: Imidazole glycerol phosphate synthase subunit HisF (254 aa).

Catalysis depends on residues D12 and D131.

This sequence belongs to the HisA/HisF family. As to quaternary structure, heterodimer of HisH and HisF.

It is found in the cytoplasm. It catalyses the reaction 5-[(5-phospho-1-deoxy-D-ribulos-1-ylimino)methylamino]-1-(5-phospho-beta-D-ribosyl)imidazole-4-carboxamide + L-glutamine = D-erythro-1-(imidazol-4-yl)glycerol 3-phosphate + 5-amino-1-(5-phospho-beta-D-ribosyl)imidazole-4-carboxamide + L-glutamate + H(+). The protein operates within amino-acid biosynthesis; L-histidine biosynthesis; L-histidine from 5-phospho-alpha-D-ribose 1-diphosphate: step 5/9. Its function is as follows. IGPS catalyzes the conversion of PRFAR and glutamine to IGP, AICAR and glutamate. The HisF subunit catalyzes the cyclization activity that produces IGP and AICAR from PRFAR using the ammonia provided by the HisH subunit. In Janthinobacterium sp. (strain Marseille) (Minibacterium massiliensis), this protein is Imidazole glycerol phosphate synthase subunit HisF.